We begin with the raw amino-acid sequence, 1763 residues long: Genome polyprotein (1763 aa).

Residues 458-614 (DGVITSCNKR…ESHKRARPGT (157 aa)) form the SF3 helicase domain. Position 484-491 (484-491 (GPPGCGKT)) interacts with ATP. O-(5'-phospho-RNA)-tyrosine is present on Tyr984. The residue at position 1040 (Thr1040) is a Phosphothreonine. Residue Ser1067 is modified to Phosphoserine. In terms of domain architecture, Peptidase C24 spans 1073–1229 (GPGTKFHKNA…KLVVPYVHID (157 aa)). Active-site for 3CLpro activity residues include His1110, Glu1131, and Cys1193. The region spanning 1478 to 1603 (AKVYAVDYSK…MFPMMFASVS (126 aa)) is the RdRp catalytic domain.

In terms of assembly, homodimer. Interacts with NTPase, protein p30 and protease-polymerase p76. As to quaternary structure, interacts with capsid protein VP1 and protease-polymerase p76. Interacts with host IEF4e; this interaction plays a role in translation of viral proteins. Homooligomer. Interacts with Vpg, protein p32 and may interact with capsid protein VP1. Post-translationally, specific enzymatic cleavages in vivo yield mature proteins. Pro-Pol is first autocatalytically cleaved, then processes the whole polyprotein. In terms of processing, VPg is uridylylated by the polymerase and is covalently attached to the 5'-end of the polyadenylated genomic and subgenomic RNAs. This uridylylated form acts as a nucleotide-peptide primer for the polymerase.

The protein resides in the host endoplasmic reticulum membrane. It carries out the reaction a ribonucleoside 5'-triphosphate + H2O = a ribonucleoside 5'-diphosphate + phosphate + H(+). The catalysed reaction is RNA(n) + a ribonucleoside 5'-triphosphate = RNA(n+1) + diphosphate. It catalyses the reaction Endopeptidase with a preference for cleavage when the P1 position is occupied by Glu-|-Xaa and the P1' position is occupied by Gly-|-Yaa.. Together with NTPase and NS4, initiates the formation of the replication complex. Induces the proliferation of the host smooth ER membranes forming long tubular structures. These remodeled membranes probably form the viral factories that contain the replication complex. Functionally, displays NTPase activity, but no helicase activity. Induces the formation of convoluted membranes derived from the host ER. These remodeled membranes probably form the viral factories that contain the replication complex. Together with NS2 and NS4, initiates the formation of the replication complex. In terms of biological role, probable key protein responsible for the formation of membrane alterations by the virus. Induces the formation of convoluted membranes derived from the host ER. These remodeled membranes probably form the viral factories that contain the replication complex. Together with NS2 and NTPase, initiates the formation of the replication complex. Its function is as follows. Viral genome-linked protein is covalently linked to the 5'-end of the positive-strand, negative-strand genomic RNAs and subgenomic RNA. Acts as a genome-linked replication primer. May recruit ribosome to viral RNA thereby promoting viral proteins translation. Interacts with host translation initiation complex to allow the translation of viral proteins. Processes the polyprotein: Pro-Pol is first released by autocleavage, then all other proteins are cleaved. Cleaves host translation initiation factor eIF4G1, eIF4G2 and PABP1 thereby inducing a shutdown of host protein synthesis. This shutdown may not prevent viral mRNA from being translated since viral Vpg replaces the cap. Also functions as an RNA-directed RNA polymerase, which replicates genomic and antigenomic viral RNA by recognizing specific signals. Transcribes a subgenomic mRNA by initiating RNA synthesis internally on antigenomic RNA. This sgRNA codes for structural proteins. Catalyzes the covalent attachment VPg with viral RNAs. Cleaves host G3BP1 thereby preventing the assembly of host stress granules. This is Genome polyprotein from Feline calicivirus (strain Cat/United States/Urbana/1960) (FCV).